A 488-amino-acid chain; its full sequence is 3-octaprenyl-4-hydroxybenzoate carboxy-lyase (488 aa).

Asparagine 172 provides a ligand contact to Mn(2+). Prenylated FMN contacts are provided by residues 175 to 177 (IYR), 189 to 191 (RWL), and 194 to 195 (RG). Glutamate 238 provides a ligand contact to Mn(2+). The active-site Proton donor is the aspartate 287.

Belongs to the UbiD family. In terms of assembly, homohexamer. Requires prenylated FMN as cofactor. Mn(2+) serves as cofactor.

It localises to the cell membrane. The catalysed reaction is a 4-hydroxy-3-(all-trans-polyprenyl)benzoate + H(+) = a 2-(all-trans-polyprenyl)phenol + CO2. Its pathway is cofactor biosynthesis; ubiquinone biosynthesis. Catalyzes the decarboxylation of 3-octaprenyl-4-hydroxy benzoate to 2-octaprenylphenol, an intermediate step in ubiquinone biosynthesis. This Pseudoalteromonas translucida (strain TAC 125) protein is 3-octaprenyl-4-hydroxybenzoate carboxy-lyase.